The chain runs to 185 residues: dCTP deaminase, dUMP-forming (185 aa).

Residues 99-104, aspartate 117, 125-127, glutamine 146, tyrosine 159, lysine 166, and glutamine 170 contribute to the dCTP site; these read KSSIAR and TLE. The active-site Proton donor/acceptor is glutamate 127.

This sequence belongs to the dCTP deaminase family. In terms of assembly, homotrimer.

It carries out the reaction dCTP + 2 H2O = dUMP + NH4(+) + diphosphate. Its pathway is pyrimidine metabolism; dUMP biosynthesis; dUMP from dCTP: step 1/1. Its function is as follows. Bifunctional enzyme that catalyzes both the deamination of dCTP to dUTP and the hydrolysis of dUTP to dUMP without releasing the toxic dUTP intermediate. This chain is dCTP deaminase, dUMP-forming, found in Methanospirillum hungatei JF-1 (strain ATCC 27890 / DSM 864 / NBRC 100397 / JF-1).